Reading from the N-terminus, the 378-residue chain is Ribosomal RNA large subunit methyltransferase G (378 aa).

The protein belongs to the methyltransferase superfamily. RlmG family.

The protein localises to the cytoplasm. The catalysed reaction is guanosine(1835) in 23S rRNA + S-adenosyl-L-methionine = N(2)-methylguanosine(1835) in 23S rRNA + S-adenosyl-L-homocysteine + H(+). Functionally, specifically methylates the guanine in position 1835 (m2G1835) of 23S rRNA. In Shewanella baltica (strain OS155 / ATCC BAA-1091), this protein is Ribosomal RNA large subunit methyltransferase G.